We begin with the raw amino-acid sequence, 768 residues long: uncharacterized protein (768 aa).

This sequence to E.coli YkiA.

This is an uncharacterized protein from Escherichia coli (strain K12).